We begin with the raw amino-acid sequence, 374 residues long: Alcohol dehydrogenase class-3 (374 aa).

S2 bears the N-acetylserine mark. Zn(2+) contacts are provided by C45, H67, C97, C100, C103, C111, and C174. K233 carries the post-translational modification N6-succinyllysine. S247 is subject to Phosphoserine. K315 carries the post-translational modification N6-succinyllysine. S324 and S351 each carry phosphoserine.

This sequence belongs to the zinc-containing alcohol dehydrogenase family. Class-III subfamily. As to quaternary structure, homodimer. Zn(2+) serves as cofactor.

It localises to the cytoplasm. The catalysed reaction is a primary alcohol + NAD(+) = an aldehyde + NADH + H(+). The enzyme catalyses a secondary alcohol + NAD(+) = a ketone + NADH + H(+). It catalyses the reaction S-(hydroxymethyl)glutathione + NADP(+) = S-formylglutathione + NADPH + H(+). It carries out the reaction S-(hydroxymethyl)glutathione + NAD(+) = S-formylglutathione + NADH + H(+). The catalysed reaction is 20-oxo-(5Z,8Z,11Z,14Z)-eicosatetraenoate + NAD(+) + H2O = (5Z,8Z,11Z,14Z)-eicosatetraenedioate + NADH + 2 H(+). The enzyme catalyses 20-hydroxy-(5Z,8Z,11Z,14Z)-eicosatetraenoate + NAD(+) = 20-oxo-(5Z,8Z,11Z,14Z)-eicosatetraenoate + NADH + H(+). It catalyses the reaction S-nitrosoglutathione + NADH + H(+) = S-(hydroxysulfenamide)glutathione + NAD(+). In terms of biological role, catalyzes the oxidation of long-chain primary alcohols and the oxidation of S-(hydroxymethyl) glutathione. Also oxidizes long chain omega-hydroxy fatty acids, such as 20-HETE, producing both the intermediate aldehyde, 20-oxoarachidonate and the end product, a dicarboxylic acid, (5Z,8Z,11Z,14Z)-eicosatetraenedioate. Class-III ADH is remarkably ineffective in oxidizing ethanol. Required for clearance of cellular formaldehyde, a cytotoxic and carcinogenic metabolite that induces DNA damage. Also acts as a S-nitroso-glutathione reductase by catalyzing the NADH-dependent reduction of S-nitrosoglutathione, thereby regulating protein S-nitrosylation. The protein is Alcohol dehydrogenase class-3 of Equus caballus (Horse).